Consider the following 119-residue polypeptide: MVQENKNFATAKAKSVRVSPRKLNLVAAFIRNMKVSEALVQLTFSSKRIAKVVKGCLQSAVANAENNLGLDIDRLVITKATVGKALVMKRVMPRAKGRATRINKFFSNLYITVTEKEDN.

It belongs to the universal ribosomal protein uL22 family. In terms of assembly, part of the 50S ribosomal subunit.

This protein binds specifically to 23S rRNA; its binding is stimulated by other ribosomal proteins, e.g. L4, L17, and L20. It is important during the early stages of 50S assembly. It makes multiple contacts with different domains of the 23S rRNA in the assembled 50S subunit and ribosome. Its function is as follows. The globular domain of the protein is located near the polypeptide exit tunnel on the outside of the subunit, while an extended beta-hairpin is found that lines the wall of the exit tunnel in the center of the 70S ribosome. The protein is Large ribosomal subunit protein uL22 of Rickettsia akari (strain Hartford).